A 461-amino-acid polypeptide reads, in one-letter code: Argininosuccinate lyase (461 aa).

This sequence belongs to the lyase 1 family. Argininosuccinate lyase subfamily.

It localises to the cytoplasm. It catalyses the reaction 2-(N(omega)-L-arginino)succinate = fumarate + L-arginine. It functions in the pathway amino-acid biosynthesis; L-arginine biosynthesis; L-arginine from L-ornithine and carbamoyl phosphate: step 3/3. This Chlorobium luteolum (strain DSM 273 / BCRC 81028 / 2530) (Pelodictyon luteolum) protein is Argininosuccinate lyase.